We begin with the raw amino-acid sequence, 115 residues long: Large ribosomal subunit protein uL22 (115 aa).

The protein belongs to the universal ribosomal protein uL22 family. As to quaternary structure, part of the 50S ribosomal subunit.

In terms of biological role, this protein binds specifically to 23S rRNA; its binding is stimulated by other ribosomal proteins, e.g. L4, L17, and L20. It is important during the early stages of 50S assembly. It makes multiple contacts with different domains of the 23S rRNA in the assembled 50S subunit and ribosome. Functionally, the globular domain of the protein is located near the polypeptide exit tunnel on the outside of the subunit, while an extended beta-hairpin is found that lines the wall of the exit tunnel in the center of the 70S ribosome. This chain is Large ribosomal subunit protein uL22, found in Lactococcus lactis subsp. lactis (strain IL1403) (Streptococcus lactis).